We begin with the raw amino-acid sequence, 440 residues long: Ribulose bisphosphate carboxylase large chain (440 aa).

An N6,N6,N6-trimethyllysine modification is found at Lys-4. Substrate contacts are provided by Asn-113 and Thr-163. Residue Lys-165 is the Proton acceptor of the active site. Lys-167 lines the substrate pocket. The Mg(2+) site is built by Lys-191, Asp-193, and Glu-194. Lys-191 carries the post-translational modification N6-carboxylysine. The Proton acceptor role is filled by His-284. Arg-285, His-317, and Ser-369 together coordinate substrate.

This sequence belongs to the RuBisCO large chain family. Type I subfamily. As to quaternary structure, heterohexadecamer of 8 large chains and 8 small chains; disulfide-linked. The disulfide link is formed within the large subunit homodimers. Requires Mg(2+) as cofactor. In terms of processing, the disulfide bond which can form in the large chain dimeric partners within the hexadecamer appears to be associated with oxidative stress and protein turnover.

The protein localises to the plastid. The protein resides in the chloroplast. The enzyme catalyses 2 (2R)-3-phosphoglycerate + 2 H(+) = D-ribulose 1,5-bisphosphate + CO2 + H2O. It catalyses the reaction D-ribulose 1,5-bisphosphate + O2 = 2-phosphoglycolate + (2R)-3-phosphoglycerate + 2 H(+). Functionally, ruBisCO catalyzes two reactions: the carboxylation of D-ribulose 1,5-bisphosphate, the primary event in carbon dioxide fixation, as well as the oxidative fragmentation of the pentose substrate in the photorespiration process. Both reactions occur simultaneously and in competition at the same active site. The protein is Ribulose bisphosphate carboxylase large chain of Matteuccia struthiopteris (European ostrich fern).